The sequence spans 420 residues: Mannose-1-phosphate guanylyltransferase regulatory subunit alpha (420 aa).

A substrate-binding domain region spans residues 2-251 (LKAVILIGGP…DGIWSQIKSA (250 aa)). Residues Glu-85 and Gln-247 each contribute to the GDP-alpha-D-mannose site. The tract at residues 273–420 (LAKHTPGGPW…SRSFTNQIIL (148 aa)) is hexapeptide repeat domain. A C-loop region spans residues 356–384 (TPSDPNPNDPRARMDSESLFKDGKLLPAI).

The protein belongs to the transferase hexapeptide repeat family. Component of the GMPPA-GMPPB mannose-1-phosphate guanylyltransferase complex composed of 4 GMPPA subunits and 8 GMPPB subunits; the complex is organized into three layers, a central layer made up of 2 GMPPA dimers sandwiched between two layers each made up of 2 GMPPB dimers. Expressed in fibroblasts (at protein level).

The protein resides in the cytoplasm. In terms of biological role, regulatory subunit of the GMPPA-GMPPB mannose-1-phosphate guanylyltransferase complex; reduces the catalytic activity of GMPPB when part of the complex. Mediates allosteric feedback inhibition of GMPPB catalytic activity upon binding GDP-alpha-D-mannose. Together with GMPPB regulates GDP-alpha-D-mannose levels. The sequence is that of Mannose-1-phosphate guanylyltransferase regulatory subunit alpha from Homo sapiens (Human).